The sequence spans 367 residues: Heme A synthase (367 aa).

The next 5 membrane-spanning stretches (helical) occupy residues 25 to 45, 111 to 131, 139 to 159, 174 to 194, and 210 to 230; these read ALRF…LVGG, LIAR…WLTG, WPLV…WWMV, LATH…IMRG, and GFAA…ALVA. Histidine 274 lines the heme pocket. Helical transmembrane passes span 276–296, 305–325, and 327–347; these read IGAY…LRAA, AILL…TLLM, and VPLH…GFAV. Histidine 335 provides a ligand contact to heme.

It belongs to the COX15/CtaA family. Type 2 subfamily. As to quaternary structure, interacts with CtaB. Heme b is required as a cofactor.

It is found in the cell membrane. The catalysed reaction is Fe(II)-heme o + 2 A + H2O = Fe(II)-heme a + 2 AH2. It functions in the pathway porphyrin-containing compound metabolism; heme A biosynthesis; heme A from heme O: step 1/1. Its function is as follows. Catalyzes the conversion of heme O to heme A by two successive hydroxylations of the methyl group at C8. The first hydroxylation forms heme I, the second hydroxylation results in an unstable dihydroxymethyl group, which spontaneously dehydrates, resulting in the formyl group of heme A. The chain is Heme A synthase from Rhizobium johnstonii (strain DSM 114642 / LMG 32736 / 3841) (Rhizobium leguminosarum bv. viciae).